A 121-amino-acid polypeptide reads, in one-letter code: Large ribosomal subunit protein eL34B (121 aa).

The protein belongs to the eukaryotic ribosomal protein eL34 family. As to quaternary structure, component of the large ribosomal subunit (LSU). Mature yeast ribosomes consist of a small (40S) and a large (60S) subunit. The 40S small subunit contains 1 molecule of ribosomal RNA (18S rRNA) and 33 different proteins (encoded by 57 genes). The large 60S subunit contains 3 rRNA molecules (25S, 5.8S and 5S rRNA) and 46 different proteins (encoded by 81 genes).

It localises to the cytoplasm. Functionally, component of the ribosome, a large ribonucleoprotein complex responsible for the synthesis of proteins in the cell. The small ribosomal subunit (SSU) binds messenger RNAs (mRNAs) and translates the encoded message by selecting cognate aminoacyl-transfer RNA (tRNA) molecules. The large subunit (LSU) contains the ribosomal catalytic site termed the peptidyl transferase center (PTC), which catalyzes the formation of peptide bonds, thereby polymerizing the amino acids delivered by tRNAs into a polypeptide chain. The nascent polypeptides leave the ribosome through a tunnel in the LSU and interact with protein factors that function in enzymatic processing, targeting, and the membrane insertion of nascent chains at the exit of the ribosomal tunnel. The protein is Large ribosomal subunit protein eL34B of Saccharomyces cerevisiae (strain ATCC 204508 / S288c) (Baker's yeast).